We begin with the raw amino-acid sequence, 186 residues long: dTTP/UTP pyrophosphatase (186 aa).

Residue D70 is the Proton acceptor of the active site.

It belongs to the Maf family. YhdE subfamily. A divalent metal cation is required as a cofactor.

The protein resides in the cytoplasm. It carries out the reaction dTTP + H2O = dTMP + diphosphate + H(+). The enzyme catalyses UTP + H2O = UMP + diphosphate + H(+). Nucleoside triphosphate pyrophosphatase that hydrolyzes dTTP and UTP. May have a dual role in cell division arrest and in preventing the incorporation of modified nucleotides into cellular nucleic acids. The protein is dTTP/UTP pyrophosphatase of Vibrio vulnificus (strain CMCP6).